Here is a 911-residue protein sequence, read N- to C-terminus: Protein dead ringer (911 aa).

Disordered stretches follow at residues 1–44, 67–87, and 172–274; these read MQLR…DCDS, SGGG…LSHH, and HVTS…QNNG. Over residues 19–34 the composition is skewed to basic and acidic residues; the sequence is IERDSDLGDDLSHGDR. Ser30 is modified (phosphoserine). Thr35 is subject to Phosphothreonine. A Phosphoserine modification is found at Ser44. Positions 174 to 201 are enriched in low complexity; it reads TSSPSGGNGSSYNGGTTPTNSSNSNATT. Gly residues predominate over residues 202 to 231; the sequence is NGGGTAGPGGTGGSGGGGGGGGGGGGGVGG. Over residues 252–273 the composition is skewed to low complexity; the sequence is AANSASNSSTSSEASNSSQQNN. Residues 293–385 form the ARID domain; it reads DPKRKEFLDD…YLYPYECEKK (93 aa). Disordered regions lie at residues 501 to 633, 662 to 775, and 826 to 877; these read GMPP…VGSG, PSMG…GKLN, and QSET…DQDM. The segment covering 512–550 has biased composition (low complexity); the sequence is HQQQHSQQQQQQQHHHQQQQQQQSQQQHHLQQQRQRSQS. A compositionally biased stretch (polar residues) spans 570 to 600; the sequence is HNNNSPPGSAHTSPQQREALNLSDSPPNLTN. Phosphoserine occurs at positions 592 and 594. Positions 601–621 are enriched in basic and acidic residues; the sequence is IKREREREPTPEPVDQDDKFV. Ser720 is subject to Phosphoserine. Positions 731–825 constitute an REKLES domain; that stretch reads TTGGSVGHRH…GVLVANVPLS (95 aa). The segment covering 737–751 has biased composition (basic residues); it reads GHRHSSPVSTKKKGG. A compositionally biased stretch (acidic residues) spans 841-853; sequence TVEEEKDEEEEEE. The segment covering 854 to 870 has biased composition (basic and acidic residues); it reads PKAAEEESHRSPVKQEN.

Present in the pharyngeal muscles, hindgut epithelium, amnioserosa, ring gland, midgut-hindgut junction, posterior region of each brain lobe, longitudinal glial cells of the CNS and the salivary gland duct of germ-band retracted embryos.

It is found in the nucleus. Transcription factor which is a downstream target of gcm and repo. Directly or indirectly activates the transcription of locos and pros, which are essential for the development of some glial cells. Plays an essential role in defining the cell shape and migration characteristics of longitudinal glia that enable them to establish a normal axon scaffold. The sequence is that of Protein dead ringer (retn) from Drosophila melanogaster (Fruit fly).